The primary structure comprises 396 residues: Elongation factor Tu (396 aa).

The region spanning 10-205 is the tr-type G domain; sequence KPHVNIGTIG…ACDDNIPDPV (196 aa). Residues 19–26 form a G1 region; it reads GHVDHGKT. 19–26 is a GTP binding site; that stretch reads GHVDHGKT. Mg(2+) is bound at residue Thr26. Residues 62–66 form a G2 region; that stretch reads GITIN. Residues 83–86 form a G3 region; that stretch reads DAPG. GTP-binding positions include 83 to 87 and 138 to 141; these read DAPGH and NKCD. Residues 138 to 141 form a G4 region; it reads NKCD. Positions 175–177 are G5; sequence SAL.

The protein belongs to the TRAFAC class translation factor GTPase superfamily. Classic translation factor GTPase family. EF-Tu/EF-1A subfamily. As to quaternary structure, monomer.

Its subcellular location is the cytoplasm. The enzyme catalyses GTP + H2O = GDP + phosphate + H(+). In terms of biological role, GTP hydrolase that promotes the GTP-dependent binding of aminoacyl-tRNA to the A-site of ribosomes during protein biosynthesis. In Corynebacterium efficiens (strain DSM 44549 / YS-314 / AJ 12310 / JCM 11189 / NBRC 100395), this protein is Elongation factor Tu.